The following is a 437-amino-acid chain: Cytochrome c biogenesis protein Ccs1 (437 aa).

Transmembrane regions (helical) follow at residues 23–43 (LQFS…GTII), 82–102 (TWWF…CSLS), and 168–188 (LAPI…VLGL).

This sequence belongs to the Ccs1/CcsB family. In terms of assembly, may interact with CcsA.

It localises to the plastid. The protein resides in the chloroplast thylakoid membrane. Its function is as follows. Required during biogenesis of c-type cytochromes (cytochrome c6 and cytochrome f) at the step of heme attachment. This Porphyra purpurea (Red seaweed) protein is Cytochrome c biogenesis protein Ccs1.